The following is a 525-amino-acid chain: Mannuronan C5-epimerase AlgG (525 aa).

Residues 1-29 form the signal peptide; the sequence is MNVQRKLASTQLKPVLLGVLLATSAWSQA. PbH1 repeat units lie at residues 287–309, 311–334, 336–358, 360–382, and 383–405; these read ADDVVLKGNTYRDNIIYGIDPHD, SERLVIAENHVYGTKKKHGIIVSR, VNNSWIINNRTHDNKLSGIVLDR, SEHNLVAYNEVYQNHSDGITLYE, and SSNNLIWGNRLINNARHGIRMRN. The active-site Proton acceptor is histidine 308.

This sequence belongs to the D-mannuronate C5-epimerase family.

It localises to the periplasm. The catalysed reaction is [(1-&gt;4)-beta-D-mannuronosyl](n) = [alginate](n). Its pathway is glycan biosynthesis; alginate biosynthesis. Its activity is regulated as follows. Inhibited by zinc. In terms of biological role, catalyzes the epimerization of beta-D-mannuronate to alpha-L-guluronate during the synthesis of the linear polysaccharide alginate. In addition, is part of a periplasmic protein complex that protects alginate from degradation by AlgL by channeling the newly formed alginate polymer through a scaffold that transfers the alginate polymer through the periplasmic space to the outer membrane secretin AlgE. The polypeptide is Mannuronan C5-epimerase AlgG (Azotobacter vinelandii).